A 109-amino-acid polypeptide reads, in one-letter code: Ribonuclease P protein component (109 aa).

Belongs to the RnpA family. In terms of assembly, consists of a catalytic RNA component (M1 or rnpB) and a protein subunit.

The catalysed reaction is Endonucleolytic cleavage of RNA, removing 5'-extranucleotides from tRNA precursor.. Its function is as follows. RNaseP catalyzes the removal of the 5'-leader sequence from pre-tRNA to produce the mature 5'-terminus. It can also cleave other RNA substrates such as 4.5S RNA. The protein component plays an auxiliary but essential role in vivo by binding to the 5'-leader sequence and broadening the substrate specificity of the ribozyme. The polypeptide is Ribonuclease P protein component (Mycoplasma capricolum subsp. capricolum (strain California kid / ATCC 27343 / NCTC 10154)).